The primary structure comprises 1043 residues: Ras guanine nucleotide exchange factor S (1043 aa).

Residues 109 to 142 (IETLQTQRRQSTLNIQALQINNELQQQLQQQQQL) are a coiled coil. 4 stretches are compositionally biased toward low complexity: residues 135–145 (QLQQQQQLPPI), 245–258 (LSPL…GLSS), 266–281 (SKNQ…NSSS), and 293–307 (NNNN…SNSS). 2 disordered regions span residues 135-160 (QLQQ…TSTI) and 245-316 (LSPL…HQSQ). Residues 404 to 434 (LAVSLQNVEGLQNIAENLEDETLNLLDLVNE) adopt a coiled-coil conformation. Residues 645 to 768 (KDGSILKVTL…LLRGLLDKMI (124 aa)) enclose the N-terminal Ras-GEF domain. In terms of domain architecture, Ras-GEF spans 803 to 1043 (SAQSIAQQLT…YDLSIALEPK (241 aa)).

Its function is as follows. Promotes the exchange of Ras-bound GDP by GTP. This chain is Ras guanine nucleotide exchange factor S (gefS), found in Dictyostelium discoideum (Social amoeba).